The primary structure comprises 5635 residues: Hemicentin-1 (5635 aa).

A signal peptide spans 1-21 (MISWEVVHTVFLFALLYSSLA). The VWFA domain occupies 41-216 (TLAFVFDVTG…EVLKWVEEAV (176 aa)). N-linked (GlcNAc...) asparagine glycans are attached at residues Asn-349 and Asn-390. Ig-like C2-type domains follow at residues 431 to 517 (PKVT…FDVS), 520 to 607 (PPVI…VFLT), 612 to 697 (PKVT…STLR), 702 to 788 (PKLM…ITLD), 793 to 883 (PVFI…TTVT), 890 to 976 (PLIG…TSVV), 981 to 1067 (PTIQ…VQLT), 1072 to 1166 (PRVF…VKLN), 1171 to 1255 (PKIQ…TEIT), 1262 to 1354 (PTVE…YNLK), 1358 to 1447 (PPVI…FNID), 1452 to 1541 (PTII…IKLT), 1546 to 1634 (PSIK…FHVD), 1638 to 1724 (PPMI…KEIK), 1733 to 1821 (PAIE…FEVT), 1826 to 1914 (PTIK…IQLH), 1919 to 2007 (PSLE…YSLQ), 2012 to 2097 (PSIS…RDID), 2104 to 2190 (PNIM…YNVN), 2195 to 2285 (PNIG…YNLQ), 2290 to 2379 (PTIT…YDLS), 2384 to 2470 (PSII…RKIF), 2478 to 2564 (PHIV…RSFS), 2571 to 2662 (PTIA…YEVK), 2666 to 2763 (PPII…VNIQ), 2766 to 2864 (PSFQ…YDVR), 2868 to 2959 (PPII…FNLN), 2964 to 3051 (PSVI…FSLT), 3056 to 3146 (PSIK…FHLN), 3151 to 3240 (PSIE…YFLS), 3245 to 3335 (PSVA…FNLN), 3340 to 3429 (PTIR…YNLQ), 3434 to 3516 (PNMD…GEVS), 3527 to 3615 (PHIN…YLVR), 3620 to 3708 (PNIA…FILT), 3713 to 3797 (PNIK…RRID), 3804 to 3892 (PSIA…VDLT), 3897 to 3983 (PSIA…VTLH), 3988 to 4076 (PVIQ…LNVQ), 4079 to 4164 (PVIS…TKLT), 4169 to 4255 (PRIR…VSLT), 4260 to 4344 (PTFT…GFVY), 4348 to 4435 (PPVF…MSLT), and 4440 to 4527 (PIIT…VIVQ). Cys-451 and Cys-499 form a disulfide bridge. N-linked (GlcNAc...) asparagine glycans are attached at residues Asn-528, Asn-550, Asn-573, and Asn-620. Cys-541 and Cys-591 are disulfide-bonded. Cysteines 633 and 681 form a disulfide. Asn-693 is a glycosylation site (N-linked (GlcNAc...) asparagine). Cysteines 723 and 772 form a disulfide. Asn-809 carries an N-linked (GlcNAc...) asparagine glycan. Disulfide bonds link Cys-814–Cys-867 and Cys-911–Cys-960. Asn-970 carries N-linked (GlcNAc...) asparagine glycosylation. Cystine bridges form between Cys-1002–Cys-1051 and Cys-1101–Cys-1150. N-linked (GlcNAc...) asparagine glycosylation is present at Asn-1158. The cysteines at positions 1192 and 1241 are disulfide-linked. An N-linked (GlcNAc...) asparagine glycan is attached at Asn-1272. Residues Cys-1288 and Cys-1338 are joined by a disulfide bond. Residue Asn-1369 is glycosylated (N-linked (GlcNAc...) asparagine). 2 cysteine pairs are disulfide-bonded: Cys-1382–Cys-1431 and Cys-1475–Cys-1525. Asn-1552 is a glycosylation site (N-linked (GlcNAc...) asparagine). Intrachain disulfides connect Cys-1569–Cys-1618, Cys-1663–Cys-1712, Cys-1756–Cys-1805, and Cys-1848–Cys-1898. A glycan (N-linked (GlcNAc...) asparagine) is linked at Asn-1929. Disulfide bonds link Cys-1942-Cys-1991 and Cys-2033-Cys-2083. 2 N-linked (GlcNAc...) asparagine glycosylation sites follow: Asn-2112 and Asn-2155. Intrachain disulfides connect Cys-2125-Cys-2174, Cys-2218-Cys-2269, and Cys-2314-Cys-2363. Asn-2395 carries N-linked (GlcNAc...) asparagine glycosylation. 3 disulfides stabilise this stretch: Cys-2408-Cys-2457, Cys-2501-Cys-2550, and Cys-2597-Cys-2646. Asn-2689 is a glycosylation site (N-linked (GlcNAc...) asparagine). Cystine bridges form between Cys-2696-Cys-2745 and Cys-2799-Cys-2848. N-linked (GlcNAc...) asparagine glycosylation is present at Asn-2887. Cysteines 2894 and 2943 form a disulfide. The N-linked (GlcNAc...) asparagine glycan is linked to Asn-2973. 6 disulfides stabilise this stretch: Cys-2986/Cys-3035, Cys-3081/Cys-3130, Cys-3173/Cys-3224, Cys-3268/Cys-3319, Cys-3364/Cys-3413, and Cys-3457/Cys-3506. 2 N-linked (GlcNAc...) asparagine glycosylation sites follow: Asn-3221 and Asn-3300. Asn-3530 is a glycosylation site (N-linked (GlcNAc...) asparagine). 2 disulfide bridges follow: Cys-3550–Cys-3599 and Cys-3643–Cys-3692. N-linked (GlcNAc...) asparagine glycosylation is found at Asn-3689 and Asn-3727. A disulfide bridge connects residues Cys-3734 and Cys-3783. An N-linked (GlcNAc...) asparagine glycan is attached at Asn-3812. Cystine bridges form between Cys-3825/Cys-3876, Cys-3918/Cys-3967, Cys-4009/Cys-4058, Cys-4100/Cys-4148, Cys-4190/Cys-4239, Cys-4281/Cys-4328, Cys-4371/Cys-4419, Cys-4461/Cys-4509, Cys-4541/Cys-4578, Cys-4545/Cys-4583, Cys-4556/Cys-4568, Cys-4598/Cys-4635, Cys-4602/Cys-4640, Cys-4613/Cys-4625, Cys-4655/Cys-4692, Cys-4659/Cys-4697, Cys-4670/Cys-4682, Cys-4712/Cys-4749, Cys-4716/Cys-4754, Cys-4727/Cys-4739, Cys-4769/Cys-4806, Cys-4773/Cys-4811, Cys-4784/Cys-4796, Cys-4826/Cys-4863, Cys-4830/Cys-4868, and Cys-4841/Cys-4853. The N-linked (GlcNAc...) asparagine glycan is linked to Asn-4029. Asn-4401 and Asn-4491 each carry an N-linked (GlcNAc...) asparagine glycan. TSP type-1 domains are found at residues 4529 to 4584 (HGGF…KPCP), 4586 to 4641 (DGSW…RPCP), 4643 to 4698 (HGAW…RNCP), 4700 to 4755 (HGKW…DPCP), 4757 to 4812 (HGNW…DMCP), and 4814 to 4869 (DGSW…QACP). A glycan (N-linked (GlcNAc...) asparagine) is linked at Asn-4606. In terms of domain architecture, Nidogen G2 beta-barrel spans 4871-5093 (GPQRARGSVI…SKGDRSNQCP (223 aa)). N-linked (GlcNAc...) asparagine glycosylation is found at Asn-4894 and Asn-5040. The region spanning 5107–5146 (DEDECAAGNPCSHSCHNAMGTYYCSCPKGLTIAADGRTCQ) is the EGF-like 1; calcium-binding domain. 3 disulfide bridges follow: Cys-5111–Cys-5121, Cys-5117–Cys-5130, and Cys-5132–Cys-5145. The EGF-like 2; calcium-binding domain maps to 5147–5191 (DIDECALGRHTCHAGQDCDNTIGSYRCVVRCGSGFRRTSDGLSCQ). Residues 5192–5229 (DINECQESSPCHQRCFNAIGSFHCGCEPGYQLKGRKCM) enclose the EGF-like 3; calcium-binding domain. 3 cysteine pairs are disulfide-bonded: Cys-5196–Cys-5206, Cys-5202–Cys-5215, and Cys-5217–Cys-5228. Residues 5230–5271 (DVNECRQNVCRPDQHCKNTRGGYKCIDLCPNGMTKAENGTCI) form the EGF-like 4; calcium-binding domain. Asn-5267 carries an N-linked (GlcNAc...) asparagine glycan. The 36-residue stretch at 5272 to 5307 (DIDECKDGTHQCRYNQICENTRGSYRCVCPRGYRSQ) folds into the EGF-like 5; calcium-binding domain. Intrachain disulfides connect Cys-5276–Cys-5289, Cys-5283–Cys-5298, Cys-5319–Cys-5330, Cys-5326–Cys-5339, Cys-5341–Cys-5354, Cys-5436–Cys-5446, Cys-5442–Cys-5455, and Cys-5457–Cys-5470. The EGF-like 6; calcium-binding domain occupies 5315–5355 (DINECEQVPKPCAHQCSNTPGSFKCICPPGQHLLGDGKSCA). An EGF-like 7; calcium-binding domain is found at 5432-5471 (DIDECENTDACQHECKNTFGSYQCICPPGYQLTHNGKTCQ). The N-linked (GlcNAc...) asparagine glycan is linked to Asn-5615.

In terms of tissue distribution, expressed in hair follicles and in the dermis (at protein level). As to expression, expressed in skin fibroblasts and retinal pigment epithelium (RPE) cells.

The protein localises to the secreted. It is found in the extracellular space. The protein resides in the extracellular matrix. It localises to the basement membrane. Its subcellular location is the cytoplasm. The protein localises to the cell junction. It is found in the cleavage furrow. Involved in transforming growth factor beta-mediated rearrangement of the podocyte cytoskeleton which includes reduction of F-actin fibers and broadening, flattening and elongation of podocytes. Plays a role in basement membrane organization. May promote cleavage furrow maturation during cytokinesis in preimplantation embryos. May play a role in the architecture of adhesive and flexible epithelial cell junctions. May play a role during myocardial remodeling by imparting an effect on cardiac fibroblast migration. The sequence is that of Hemicentin-1 (HMCN1) from Homo sapiens (Human).